The sequence spans 460 residues: Kynurenine 3-monooxygenase (460 aa).

This sequence belongs to the aromatic-ring hydroxylase family. KMO subfamily. The cofactor is FAD.

Its subcellular location is the mitochondrion. The catalysed reaction is L-kynurenine + NADPH + O2 + H(+) = 3-hydroxy-L-kynurenine + NADP(+) + H2O. It functions in the pathway cofactor biosynthesis; NAD(+) biosynthesis; quinolinate from L-kynurenine: step 1/3. In terms of biological role, catalyzes the hydroxylation of L-kynurenine (L-Kyn) to form 3-hydroxy-L-kynurenine (L-3OHKyn). Required for synthesis of quinolinic acid. The protein is Kynurenine 3-monooxygenase of Dictyostelium discoideum (Social amoeba).